We begin with the raw amino-acid sequence, 601 residues long: Aspartate--tRNA ligase (601 aa).

E183 serves as a coordination point for L-aspartate. The aspartate stretch occupies residues 207-210; it reads QIFK. Position 229 (R229) interacts with L-aspartate. ATP is bound by residues 229 to 231 and Q238; that span reads RDE. H457 is an L-aspartate binding site. E497 contributes to the ATP binding site. Residue R504 participates in L-aspartate binding. ATP is bound at residue 549–552; it reads GIDR.

The protein belongs to the class-II aminoacyl-tRNA synthetase family. Type 1 subfamily. As to quaternary structure, homodimer.

It is found in the cytoplasm. The enzyme catalyses tRNA(Asp) + L-aspartate + ATP = L-aspartyl-tRNA(Asp) + AMP + diphosphate. Its function is as follows. Catalyzes the attachment of L-aspartate to tRNA(Asp) in a two-step reaction: L-aspartate is first activated by ATP to form Asp-AMP and then transferred to the acceptor end of tRNA(Asp). This chain is Aspartate--tRNA ligase, found in Leptospira interrogans serogroup Icterohaemorrhagiae serovar copenhageni (strain Fiocruz L1-130).